Reading from the N-terminus, the 254-residue chain is Dihydroorotate dehydrogenase B (NAD(+)), electron transfer subunit (254 aa).

The FAD-binding FR-type domain maps to 1–99; it reads MLQTEMKVIQ…LGPLGKGFDI (99 aa). FAD is bound by residues 50-53, 67-69, and 74-75; these read RPIS, LYR, and GT. [2Fe-2S] cluster contacts are provided by Cys-218, Cys-223, Cys-226, and Cys-241.

Belongs to the PyrK family. Heterotetramer of 2 PyrK and 2 PyrD type B subunits. Requires [2Fe-2S] cluster as cofactor. FAD is required as a cofactor.

It participates in pyrimidine metabolism; UMP biosynthesis via de novo pathway; orotate from (S)-dihydroorotate (NAD(+) route): step 1/1. Functionally, responsible for channeling the electrons from the oxidation of dihydroorotate from the FMN redox center in the PyrD type B subunit to the ultimate electron acceptor NAD(+). This chain is Dihydroorotate dehydrogenase B (NAD(+)), electron transfer subunit, found in Listeria monocytogenes serovar 1/2a (strain ATCC BAA-679 / EGD-e).